The sequence spans 372 residues: tRNA-specific 2-thiouridylase MnmA (372 aa).

ATP contacts are provided by residues 16–23 (GMSGGVDS) and Met-42. The tract at residues 102–104 (NPD) is interaction with target base in tRNA. Cys-107 serves as the catalytic Nucleophile. Cys-107 and Cys-205 are joined by a disulfide. Gly-132 contributes to the ATP binding site. The interaction with tRNA stretch occupies residues 155-157 (KDQ). Cys-205 acts as the Cysteine persulfide intermediate in catalysis. The interval 317 to 318 (RY) is interaction with tRNA.

This sequence belongs to the MnmA/TRMU family.

The protein localises to the cytoplasm. The catalysed reaction is S-sulfanyl-L-cysteinyl-[protein] + uridine(34) in tRNA + AH2 + ATP = 2-thiouridine(34) in tRNA + L-cysteinyl-[protein] + A + AMP + diphosphate + H(+). Functionally, catalyzes the 2-thiolation of uridine at the wobble position (U34) of tRNA, leading to the formation of s(2)U34. In Shewanella sp. (strain W3-18-1), this protein is tRNA-specific 2-thiouridylase MnmA.